The following is a 300-amino-acid chain: Ribosomal RNA small subunit methyltransferase H (300 aa).

Residues 46 to 48 (GGH), aspartate 65, phenylalanine 92, aspartate 107, and glutamine 114 contribute to the S-adenosyl-L-methionine site.

The protein belongs to the methyltransferase superfamily. RsmH family.

The protein localises to the cytoplasm. The catalysed reaction is cytidine(1402) in 16S rRNA + S-adenosyl-L-methionine = N(4)-methylcytidine(1402) in 16S rRNA + S-adenosyl-L-homocysteine + H(+). Specifically methylates the N4 position of cytidine in position 1402 (C1402) of 16S rRNA. The sequence is that of Ribosomal RNA small subunit methyltransferase H from Prochlorococcus marinus (strain AS9601).